The chain runs to 172 residues: Peptidyl-prolyl cis-trans isomerase (172 aa).

The region spanning 7 to 170 (FFDMAIAGNP…RPVTIADCGQ (164 aa)) is the PPIase cyclophilin-type domain.

The protein belongs to the cyclophilin-type PPIase family. In terms of tissue distribution, expressed in meristematic tissues, with higher levels in nodules.

The protein localises to the cytoplasm. The enzyme catalyses [protein]-peptidylproline (omega=180) = [protein]-peptidylproline (omega=0). Its activity is regulated as follows. Binds cyclosporin A (CsA). CsA mediates some of its effects via an inhibitory action on PPIase. Functionally, PPIases accelerate the folding of proteins. It catalyzes the cis-trans isomerization of proline imidic peptide bonds in oligopeptides. The protein is Peptidyl-prolyl cis-trans isomerase of Lupinus luteus (European yellow lupine).